Here is a 315-residue protein sequence, read N- to C-terminus: uncharacterized protein (315 aa).

This is an uncharacterized protein from Homo sapiens (Human).